A 247-amino-acid polypeptide reads, in one-letter code: Acetoacetate decarboxylase 1 (247 aa).

Residue Lys116 is the Schiff-base intermediate with acetoacetate of the active site.

The protein belongs to the ADC family.

The catalysed reaction is acetoacetate + H(+) = acetone + CO2. Its function is as follows. Catalyzes the conversion of acetoacetate to acetone and carbon dioxide. The protein is Acetoacetate decarboxylase 1 of Mesorhizobium japonicum (strain LMG 29417 / CECT 9101 / MAFF 303099) (Mesorhizobium loti (strain MAFF 303099)).